A 91-amino-acid chain; its full sequence is Alpha-defensin-related sequence 10 (91 aa).

Residues 1–19 form the signal peptide; the sequence is MKKLVLLSAFVLLAFQVQA. A propeptide spanning residues 20–65 is cleaved from the precursor; that stretch reads DSIQNTDEETKTEEQPGEENQAMSVSFGDPEGSALQDAAVGMARPC. Residues 21–52 form a disordered region; the sequence is SIQNTDEETKTEEQPGEENQAMSVSFGDPEGS. A run of 7 repeats spans residues 65–67, 68–70, 71–73, 74–76, 77–79, 80–82, and 83–85. The segment at 65 to 85 is 7 X 3 AA tandem repeats of C-P-X; that stretch reads CPPCPSCPSCPWCPMCPRCPS.

Belongs to the alpha-defensin family. In terms of tissue distribution, paneth cells of the small bowel.

The protein localises to the secreted. In terms of biological role, apparent precursor of a secreted, cationic, proline- and cysteine-rich peptide that contains Cys-Pro-Xaa repeats. Unlike cryptdin, the proposed mature peptide region lacks the structural motif characteristic of defensins. It may have microbicidal activities. The protein is Alpha-defensin-related sequence 10 (Defa-rs10) of Mus musculus (Mouse).